The sequence spans 485 residues: MSIRYESVEKLSEMIKNNEIKPSEVVKDIYDAIEETDPTIKSFLALDKDNAIKKAKELDELQAKGQMEGKLFGIPMGIKDNIITKDVETTCASKMLEGFVPIYESTVMNKLHDENAILIGKLNMDEFAMGGSTETSYFKQTVNPFDHTAVPGGSSGGSAAAVAAGLVPFSLGSDTGGSIRQPAAYCGVVGMKPTYGRVSRFGLVAFASSLDQIGPITRNVKDNAIVLETISGVDRNDSTSAPVEDVDFTSEIGKDIKGLKVALPKEYLGEGINEDVKEAVKNAVETLKSLGAEVDEVSLPNTKYGIPSYYVIASSEASANLARFDGIRYGYHSKEAQSLEELYKMSRSEGFGAEVKRRIFLGTFALSSGYYDAYYKKSQKVRTLIKNDFDKVFENYDVVVGPTAPTTAFNLGDEIDDPLTMYANDLLTTPVNLAGLPGISVPCGQSNGRPIGLQFIGKPFDEKTLYRVAYQYETQFNLHDAYEKL.

Residues Lys-79 and Ser-154 each act as charge relay system in the active site. The Acyl-ester intermediate role is filled by Ser-178.

This sequence belongs to the amidase family. GatA subfamily. As to quaternary structure, heterotrimer of A, B and C subunits.

It carries out the reaction L-glutamyl-tRNA(Gln) + L-glutamine + ATP + H2O = L-glutaminyl-tRNA(Gln) + L-glutamate + ADP + phosphate + H(+). Functionally, allows the formation of correctly charged Gln-tRNA(Gln) through the transamidation of misacylated Glu-tRNA(Gln) in organisms which lack glutaminyl-tRNA synthetase. The reaction takes place in the presence of glutamine and ATP through an activated gamma-phospho-Glu-tRNA(Gln). The sequence is that of Glutamyl-tRNA(Gln) amidotransferase subunit A from Staphylococcus haemolyticus (strain JCSC1435).